Reading from the N-terminus, the 942-residue chain is MKSIDIRGARTHNLKNINLILPRDKLIVITGLSGSGKSSLAFDTLYAEGQRRYVESLSAYARQFLSLMEKPDVDHIEGLSPAISIEQKSTSHNPRSTVGTITEIHDYLRLLFARVGEPRCPKHDLPLVAQTISQMVDRVMQEPEGKRLMLLAPVVRNRKGEHVKLLENLTASGYIRARINGEICDLSDPPVLELQKKHTIEVVVDRFKVRSDMMSRLAESFETALELSGSTAIIADMDDPGAPEMVFSASFACSECGYSLPELEPRLFSFNNPAGACPTCDGLGVEQYFDPAKVVQNPDVSLASGAIKGWDRRSLYYFSLLTAVASYYAFDIDTPFAQLPAKIQQIILYGSSDEIEFFYINDRDDKIQRKHTFEGVLNNMARRYKETESNAVRDELAKYINNRACLACQGSRLRQEARNVFIEQANLPEIAEKSIGEALTFFEQLELNGQRAQIAEKILKEIRERLQFLVNVGLNYLSLSRSAETLSGGEAQRIRLASQIGAGLVGVMYVLDEPSIGLHQRDNERLLNTLIHLRDLGNTVIVVEHDEDAIRAADHIVDIGPGAGVHGGQVIAQGSATEIMQIEASITGQYLAGKQKIEIPTERIPYDANKLLILSGASGNNLKHVELVIPVGLFTCITGVSGSGKSTLINDTLFPLAQNALNRAERTDVAPYQAIDGLAHFDKVIDIDQSPIGRTPRSNPATYTGLFTPIRELFAGTQEARARGYNVGRFSFNVRGGRCEACQGDGVIKVEMHFLPDVYVPCDHCKGKRYNRETLEVRYKGKTIHQVLEMTVEEAREFFDAIPAIARKLQTLIDVGLSYIRLGQSSTTLSGGEAQRVKLATELSKRDTGKTLYILDEPTTGLHFADIKQLLAVLHKLRDQGNTIVVIEHNLDVIKTADWIVDLGPEGGAGGGQIIAQGTPEDVAQQPGSHTARFLTQILAKG.

31–38 (GLSGSGKS) contacts ATP. A C4-type zinc finger spans residues 253 to 280 (CSECGYSLPELEPRLFSFNNPAGACPTC). ABC transporter domains follow at residues 310-586 (WDRR…EASI) and 606-936 (YDAN…RFLT). 639-646 (GVSGSGKS) lines the ATP pocket. A C4-type zinc finger spans residues 739–765 (CEACQGDGVIKVEMHFLPDVYVPCDHC).

The protein belongs to the ABC transporter superfamily. UvrA family. As to quaternary structure, forms a heterotetramer with UvrB during the search for lesions.

It is found in the cytoplasm. The UvrABC repair system catalyzes the recognition and processing of DNA lesions. UvrA is an ATPase and a DNA-binding protein. A damage recognition complex composed of 2 UvrA and 2 UvrB subunits scans DNA for abnormalities. When the presence of a lesion has been verified by UvrB, the UvrA molecules dissociate. The polypeptide is UvrABC system protein A (Haemophilus ducreyi (strain 35000HP / ATCC 700724)).